We begin with the raw amino-acid sequence, 410 residues long: Transcription factor SPN1 (410 aa).

Positions 1–132 (MSTADQEQPK…SRQELEEKLD (132 aa)) are disordered. Thr15 carries the phosphothreonine modification. Over residues 20–52 (TASSQKSTINAENENTKQNQSMEPQETSKGTSN) the composition is skewed to polar residues. Ser23 is modified (phosphoserine; by ATM or ATR). The residue at position 40 (Ser40) is a Phosphoserine. Over residues 53-65 (DTKDPDNGEKNEE) the composition is skewed to basic and acidic residues. Ser85 is subject to Phosphoserine. Thr86 bears the Phosphothreonine mark. Position 89 is a phosphoserine (Ser89). The 78-residue stretch at 219-296 (QSVRIWLEPL…AEWTRPIIGA (78 aa)) folds into the TFIIS N-terminal domain. Residues 318 to 346 (KSVMDSAKNRKKKSKSGEDPTSRGSSVQT) form a disordered region.

It belongs to the IWS1 family. In terms of assembly, interacts with ABD1, RBP1, SPT5 and SPT6.

Its subcellular location is the nucleus. Transcription factor involved in RNA polymerase II transcription regulation. May function in both SPT15/TBP post-recruitment and recruitment steps of transcription. This chain is Transcription factor SPN1 (SPN1), found in Saccharomyces cerevisiae (strain ATCC 204508 / S288c) (Baker's yeast).